A 138-amino-acid polypeptide reads, in one-letter code: MNNKFYQLTVISAENFIFSNLVKKSNITGSEGNLGILPGHAPLITKIKPGLIHIISSKNIEEYIYLSGGILEINSNVVTVLADTAIRGKEIDEKKAIESKKNAEELILKSKERHEYIRAVIELSKAIAKLRVCKLSNK.

This sequence belongs to the ATPase epsilon chain family. As to quaternary structure, F-type ATPases have 2 components, CF(1) - the catalytic core - and CF(0) - the membrane proton channel. CF(1) has five subunits: alpha(3), beta(3), gamma(1), delta(1), epsilon(1). CF(0) has three main subunits: a, b and c.

It is found in the cell inner membrane. Functionally, produces ATP from ADP in the presence of a proton gradient across the membrane. In Wigglesworthia glossinidia brevipalpis, this protein is ATP synthase epsilon chain.